A 486-amino-acid chain; its full sequence is Uridine/cytidine kinase UKL1, chloroplastic (486 aa).

Residues methionine 1–serine 47 constitute a chloroplast transit peptide. Low complexity predominate over residues serine 31–serine 54. Positions serine 31–valine 67 are disordered. The segment at proline 59 to glycine 264 is uridine kinase. Residues asparagine 274–glutamine 486 are uracil phosphoribosyltransferase. GTP-binding positions include lysine 298, arginine 307, and cysteine 341–leucine 344. The 5-phospho-alpha-D-ribose 1-diphosphate site is built by arginine 351 and arginine 376. Position 396 (arginine 396) interacts with GTP. Residues aspartate 402, threonine 407 to serine 410, and glutamate 473 contribute to the 5-phospho-alpha-D-ribose 1-diphosphate site. Glycine 472–phenylalanine 474 lines the uracil pocket.

It in the N-terminal section; belongs to the uridine kinase family. The protein in the C-terminal section; belongs to the UPRTase family. As to expression, expressed in roots, leaves and stems.

Its subcellular location is the plastid. The protein resides in the chloroplast. It is found in the cytoplasm. It catalyses the reaction cytidine + ATP = CMP + ADP + H(+). It carries out the reaction uridine + ATP = UMP + ADP + H(+). Its pathway is pyrimidine metabolism; CTP biosynthesis via salvage pathway; CTP from cytidine: step 1/3. It functions in the pathway pyrimidine metabolism; UMP biosynthesis via salvage pathway; UMP from uridine: step 1/1. Its function is as follows. Involved in the pyrimidine salvage pathway. Phosphorylates uridine to uridine monophosphate (UMP). Phosphorylates cytidine to cytidine monophosphate (CMP). Does not possess uracil phosphoribosyltransferase (UPRTase) activity that catalyzes the conversion of uracil and 5-phospho-alpha-D-ribose 1-diphosphate (PRPP) to UMP and diphosphate. This chain is Uridine/cytidine kinase UKL1, chloroplastic, found in Arabidopsis thaliana (Mouse-ear cress).